A 252-amino-acid polypeptide reads, in one-letter code: F-box/SPRY domain-containing protein 1 (252 aa).

An F-box domain is found at 1-48 (MVDPLCNYNVLEAIFSYLELNDLYRCSQVCKSWYHFLNDENSDVWRWH). The 193-residue stretch at 58 to 250 (VKSDLLASVS…VSMVYLGTPL (193 aa)) folds into the B30.2/SPRY domain.

This sequence belongs to the FBXO45/Fsn family. As to quaternary structure, component of an E3 ubiquitin ligase complex composed of hiw and Fsn.

The protein localises to the synapse. The protein operates within protein modification; protein ubiquitination. Required in the presynaptic motoneuron to down-regulate the levels of wnd and restrain synaptic terminal growth at the neuromuscular junction (NMJ). The chain is F-box/SPRY domain-containing protein 1 from Drosophila virilis (Fruit fly).